A 173-amino-acid chain; its full sequence is MVDSNDDAFDGEKSKTQIKRELHALVELGERLTTLKADTLARLPLTDELRKALAEASKHTAHGARKRHMSFVGKLMRVQDLDAIHALLEQMDSSTRQYNERFHSLERWRDRLIDGNDEDLERFVNEYPDTDRQQLRSLVRHAQHEKARNKPPAAARKVFKYIRDLDELQRGLR.

The protein belongs to the DarP family.

The protein resides in the cytoplasm. Functionally, member of a network of 50S ribosomal subunit biogenesis factors which assembles along the 30S-50S interface, preventing incorrect 23S rRNA structures from forming. Promotes peptidyl transferase center (PTC) maturation. This chain is Dual-action ribosomal maturation protein DarP, found in Pseudomonas putida (strain ATCC 700007 / DSM 6899 / JCM 31910 / BCRC 17059 / LMG 24140 / F1).